The sequence spans 505 residues: MSRSYNDELQFLEKINKNCWRIKKGFVPNMQVEGVFYVNDALEKLMFEELRNACRGGGVGGFLPAMKQIGNVAALPGIVHRSIGLPDVHSGYGFAIGNMAAFDMNDPEAVVSPGGVGFDINCGVRLLRTNLDESDVQPVKEQLAQAMFDHIPVGVGSKGVIPMNAKDLEEALEMGVDWSLREGYAWAEDKEHCEEYGRMLQADPNKVSARAKKRGLPQLGTLGAGNHYAEIQVVDEIFNEYAAKKMGIDHKGQVCVMIHSGSRGLGHQVATDALVAMEKAMKRDKIIVNDRQLACARIASPEGQDYLKGMAAAGNYAWVNRSSMTFLTRQAFAKVFNTTPDDLDLHVIYDVSHNIAKVEQHVVDGKERTLLVHRKGSTRAFPPHHPLIAVDYQLTGQPVLIGGTMGTCSYVLTGTEQGMTETFGTTCHGAGRALSRAKSRRNLDFQDVLDKLADMGIAIRVASPKLVMEEAPESYKNVTDVVNTCHDAGISKKAIKLRPIAVIKG.

Residues D119, C122, H227, and H259 each coordinate Mn(2+). GMP is bound at residue 226–230; it reads NHYAE. S300 carries the phosphoserine modification. Mn(2+) is bound at residue H353. Residues 353-354, 402-405, S409, and 428-431 contribute to the GMP site; these read HN, GGTM, and HGAG. H428 functions as the GMP-histidine intermediate in the catalytic mechanism. A Glycyl lysine isopeptide (Lys-Gly) (interchain with G-Cter in SUMO2) cross-link involves residue K496. K504 provides a ligand contact to GMP.

It belongs to the RtcB family. As to quaternary structure, catalytic component of the tRNA-splicing ligase complex. It depends on Mn(2+) as a cofactor.

It localises to the nucleus. It is found in the cytoplasm. It carries out the reaction a 3'-end 3'-phospho-ribonucleotide-RNA + a 5'-end dephospho-ribonucleoside-RNA + GTP = a ribonucleotidyl-ribonucleotide-RNA + GMP + diphosphate. The catalysed reaction is a 3'-end 2',3'-cyclophospho-ribonucleotide-RNA + a 5'-end dephospho-ribonucleoside-RNA + GTP + H2O = a ribonucleotidyl-ribonucleotide-RNA + GMP + diphosphate + H(+). Its activity is regulated as follows. Protein archease stimulates the activity of the tRNA ligase complex with high efficiency in the presence of GTP. Its function is as follows. Catalytic subunit of the tRNA-splicing ligase complex that acts by directly joining spliced tRNA halves to mature-sized tRNAs by incorporating the precursor-derived splice junction phosphate into the mature tRNA as a canonical 3',5'-phosphodiester. May act as an RNA ligase with broad substrate specificity, and may function toward other RNAs. This is RNA-splicing ligase RtcB homolog from Homo sapiens (Human).